A 230-amino-acid chain; its full sequence is Demethylmenaquinone methyltransferase (230 aa).

S-adenosyl-L-methionine contacts are provided by residues threonine 62, aspartate 80, 102 to 103, and serine 119; that span reads DG.

This sequence belongs to the class I-like SAM-binding methyltransferase superfamily. MenG/UbiE family.

The enzyme catalyses a 2-demethylmenaquinol + S-adenosyl-L-methionine = a menaquinol + S-adenosyl-L-homocysteine + H(+). It participates in quinol/quinone metabolism; menaquinone biosynthesis; menaquinol from 1,4-dihydroxy-2-naphthoate: step 2/2. Functionally, methyltransferase required for the conversion of demethylmenaquinol (DMKH2) to menaquinol (MKH2). The polypeptide is Demethylmenaquinone methyltransferase (Streptomyces griseus subsp. griseus (strain JCM 4626 / CBS 651.72 / NBRC 13350 / KCC S-0626 / ISP 5235)).